An 868-amino-acid chain; its full sequence is MADVTVKQLAQVVGIPVERLLNQLQEAGLSFTDDQQTVNEEQKRILLNHLKGSSNRDISAAPERITLRRKSMSQVTVGHDMHSGKTVNIEVRKKKTFIKRSAIPEQAEVEEPVVPPVVEEPVHEEITVVSDVSAETPELKETEEHPVIEPVAELDETVKEEEKINLEENTAESQDELAHANTDVIENLVDVVEETIPVSKKEEVKPEKVSKKKHLEQTDTDISEFKKGKKKPKYHTFEHDEEEQELHRRGGRSKFKKKKGTEKSDKYREAEETLTHGFALPTAPIVREVLIPETITVAELAKRMSVKAAEVIKVMMSLGAMATINQVIDQETSVIVVEEMGHKPVIIKEDAVETGLGEAISKGTKTEGRAPVVTIMGHVDHGKTSLLDYIRRTKVAAGEAGGITQHIGAYHVSTPKGNITFLDTPGHAAFTAMRARGAQATDIVILIVAADDGVKPQTIEAIQHAKAAKVPIIVAINKMDKPDADPERVMNELSVQEVIPEAWGGDTMFVNISAKSGMGIDDLLDAILLQSEVLELKAVTDGAAKGVVIESRLDKGRGPVATVLVQSGTLHKGDILLAGFQYGRVRALVSDNGDLVDSAGPSIPVEVLGLSAIPHAGDEAVVVPDEKKAREVALFRQGRFRDVKLARRQKTTIEGIMENMTATESKVLNIVLKADVQGSLEAISDALTKLSTDEVKVEVISSGVGGITESDVHLAIASNAILIGFNVRADGTAKRLAEQESVSIHYYSVIYDIVDQIKGALTGMLAPQFKEEIIGIAEVRDVFKSPKIGAIAGCMVIEGVVKRNNPIRVLRSNVVIYEGTLESLRRFKDDVLEVRQGFECGIGVKNYNDVKPGDLIEVFETVEIKRDL.

The disordered stretch occupies residues 201–269; that stretch reads KEEVKPEKVS…GTEKSDKYRE (69 aa). The span at 249-260 shows a compositional bias: basic residues; sequence RGGRSKFKKKKG. The tr-type G domain occupies 368 to 537; sequence GRAPVVTIMG…LLQSEVLELK (170 aa). Positions 377 to 384 are G1; that stretch reads GHVDHGKT. 377-384 contacts GTP; sequence GHVDHGKT. A G2 region spans residues 402 to 406; it reads GITQH. The segment at 423–426 is G3; it reads DTPG. Residues 423 to 427 and 477 to 480 contribute to the GTP site; these read DTPGH and NKMD. The G4 stretch occupies residues 477–480; the sequence is NKMD. A G5 region spans residues 513 to 515; it reads SAK.

It belongs to the TRAFAC class translation factor GTPase superfamily. Classic translation factor GTPase family. IF-2 subfamily.

The protein resides in the cytoplasm. One of the essential components for the initiation of protein synthesis. Protects formylmethionyl-tRNA from spontaneous hydrolysis and promotes its binding to the 30S ribosomal subunits. Also involved in the hydrolysis of GTP during the formation of the 70S ribosomal complex. This Legionella pneumophila (strain Corby) protein is Translation initiation factor IF-2.